Reading from the N-terminus, the 1046-residue chain is DNA-directed RNA polymerase subunit beta' (1046 aa).

Asp-383, Asp-385, and Asp-387 together coordinate Mg(2+). Residues Cys-752, Cys-826, Cys-833, and Cys-836 each contribute to the Zn(2+) site.

It belongs to the RNA polymerase beta' chain family. As to quaternary structure, the RNAP catalytic core consists of 2 alpha, 1 beta, 1 beta' and 1 omega subunit. When a sigma factor is associated with the core the holoenzyme is formed, which can initiate transcription. The cofactor is Mg(2+). Zn(2+) is required as a cofactor.

The enzyme catalyses RNA(n) + a ribonucleoside 5'-triphosphate = RNA(n+1) + diphosphate. Functionally, DNA-dependent RNA polymerase catalyzes the transcription of DNA into RNA using the four ribonucleoside triphosphates as substrates. The chain is DNA-directed RNA polymerase subunit beta' from Weissella hellenica.